An 829-amino-acid polypeptide reads, in one-letter code: Isethionate sulfite-lyase (829 aa).

Positions 31–699 constitute a PFL domain; it reads ERVFNILDSF…VVSATPNGRL (669 aa). Residues Arg-188, Gln-192, 467–469, and Arg-677 contribute to the 2-hydroxyethane-1-sulfonate site; that span reads CTE. Cys-467 functions as the Cysteine radical intermediate in the catalytic mechanism. The Proton acceptor role is filled by Glu-469. One can recognise a Glycine radical domain in the interval 706–829; that stretch reads DGSSASHGAD…LIARTQHDAM (124 aa). A Glycine radical modification is found at Gly-804.

It belongs to the glycyl radical enzyme (GRE) family. Homodimer. Post-translationally, requires the activating protein IslB to generate the key active site glycyl radical on Gly-804 that is involved in catalysis.

The catalysed reaction is 2-hydroxyethane-1-sulfonate = acetaldehyde + sulfite + H(+). It participates in organosulfur degradation; alkanesulfonate degradation. In terms of biological role, involved in an anaerobic respiration pathway that converts the sulfonate isethionate (2-hydroxyethanesulfonate) to ammonia, acetate and sulfide. Catalyzes the radical-mediated C-S bond cleavage of isethionate (2-hydroxyethanesulfonate) to form sulfite and acetaldehyde. This is Isethionate sulfite-lyase from Oleidesulfovibrio alaskensis (strain ATCC BAA-1058 / DSM 17464 / G20) (Desulfovibrio alaskensis).